Reading from the N-terminus, the 168-residue chain is Large ribosomal subunit protein uL10 (168 aa).

It belongs to the universal ribosomal protein uL10 family. As to quaternary structure, part of the ribosomal stalk of the 50S ribosomal subunit. The N-terminus interacts with L11 and the large rRNA to form the base of the stalk. The C-terminus forms an elongated spine to which L12 dimers bind in a sequential fashion forming a multimeric L10(L12)X complex.

In terms of biological role, forms part of the ribosomal stalk, playing a central role in the interaction of the ribosome with GTP-bound translation factors. The sequence is that of Large ribosomal subunit protein uL10 from Acinetobacter baumannii (strain AB307-0294).